A 329-amino-acid chain; its full sequence is Probable nicotianamine synthase 4 (329 aa).

The protein belongs to the nicotianamine synthase (NAS)-like family.

It catalyses the reaction 3 S-adenosyl-L-methionine = nicotianamine + 3 S-methyl-5'-thioadenosine + 3 H(+). Functionally, synthesizes nicotianamine, a polyamine that is the first intermediate in the synthesis of the phytosiderophores of the mugineic acid type found in gramineae which serves as a sensor for the physiological iron status within the plant, and/or might be involved in the transport of iron. This Hordeum vulgare (Barley) protein is Probable nicotianamine synthase 4 (NAS4).